The following is a 221-amino-acid chain: Ribosomal RNA small subunit methyltransferase Nep1 (221 aa).

S-adenosyl-L-methionine is bound by residues Gly-174, Gly-179, and 196–201 (IGDETM).

The protein belongs to the class IV-like SAM-binding methyltransferase superfamily. RNA methyltransferase NEP1 family. As to quaternary structure, homodimer.

It carries out the reaction a pseudouridine in rRNA + S-adenosyl-L-methionine = an N(1)-methylpseudouridine in rRNA + S-adenosyl-L-homocysteine + H(+). Functionally, methyltransferase involved in ribosomal biogenesis. Specifically catalyzes the N1-methylation of the pseudouridine corresponding to position 914 in M.jannaschii 16S rRNA. This is Ribosomal RNA small subunit methyltransferase Nep1 from Pyrobaculum islandicum (strain DSM 4184 / JCM 9189 / GEO3).